We begin with the raw amino-acid sequence, 173 residues long: Large ribosomal subunit protein uL10 (173 aa).

It belongs to the universal ribosomal protein uL10 family. As to quaternary structure, part of the ribosomal stalk of the 50S ribosomal subunit. The N-terminus interacts with L11 and the large rRNA to form the base of the stalk. The C-terminus forms an elongated spine to which L12 dimers bind in a sequential fashion forming a multimeric L10(L12)X complex.

Forms part of the ribosomal stalk, playing a central role in the interaction of the ribosome with GTP-bound translation factors. In Cupriavidus pinatubonensis (strain JMP 134 / LMG 1197) (Cupriavidus necator (strain JMP 134)), this protein is Large ribosomal subunit protein uL10.